A 439-amino-acid polypeptide reads, in one-letter code: Amino-acid acetyltransferase (439 aa).

The N-acetyltransferase domain occupies 289 to 429 (EDIRIATVQD…DHYNYQRRSK (141 aa)).

It belongs to the acetyltransferase family. ArgA subfamily.

The protein resides in the cytoplasm. It catalyses the reaction L-glutamate + acetyl-CoA = N-acetyl-L-glutamate + CoA + H(+). It functions in the pathway amino-acid biosynthesis; L-arginine biosynthesis; N(2)-acetyl-L-ornithine from L-glutamate: step 1/4. The sequence is that of Amino-acid acetyltransferase from Mannheimia succiniciproducens (strain KCTC 0769BP / MBEL55E).